The primary structure comprises 284 residues: Ermin (284 aa).

Positions 1–23 (MTDVPATFTQAECNGDKPPENGQ) are disordered. Ser73 bears the Phosphoserine mark. A disordered region spans residues 110-251 (REGHQWEKIP…PTLGKKSDIS (142 aa)). 2 stretches are compositionally biased toward basic and acidic residues: residues 126–140 (EIRR…QPLK) and 171–183 (LHSK…KVWD). Acidic residues predominate over residues 184 to 200 (EEIDDDDDDNCNNDEDE). Over residues 201–220 (VRVIEFKKKHEEVSQFKEEG) the composition is skewed to basic and acidic residues. 4 positions are modified to phosphoserine: Ser214, Ser226, Ser230, and Ser233. Positions 225–235 (DSPLSSASSQA) are enriched in low complexity. Thr237 is subject to Phosphothreonine. A binds actin region spans residues 265–284 (KIRKGNTKQRIDEFESMMHL).

In terms of assembly, binds actin. In terms of tissue distribution, highly expressed in adult and fetal brain. Expressed at intermediate levels in the lung and liver.

It localises to the cytoplasm. It is found in the cytoskeleton. Plays a role in cytoskeletal rearrangements during the late wrapping and/or compaction phases of myelinogenesis as well as in maintenance and stability of myelin sheath in the adult. May play an important role in late-stage oligodendroglia maturation, myelin/Ranvier node formation during CNS development, and in the maintenance and plasticity of related structures in the mature CNS. This chain is Ermin (ERMN), found in Homo sapiens (Human).